Reading from the N-terminus, the 436-residue chain is F-box protein SKIP16 (436 aa).

An F-box; degenerate domain is found at 75 to 111 (RESFRMYPWNLVKRVRLCWDNLKQWLTLNFPEAKATL). The ApaG domain occupies 295 to 436 (VSVTNGVQVR…FPLELPDYIF (142 aa)).

Part of a SCF (ASK-cullin-F-box) protein ligase complex. Interacts with SKP1A/ASK1, SKP1B/ASK2, ASK4, ASK11 and ASK13.

It participates in protein modification; protein ubiquitination. Component of SCF(ASK-cullin-F-box) E3 ubiquitin ligase complexes, which may mediate the ubiquitination and subsequent proteasomal degradation of target proteins. The sequence is that of F-box protein SKIP16 (SKIP16) from Arabidopsis thaliana (Mouse-ear cress).